The following is a 208-amino-acid chain: Holliday junction resolvase RecU (208 aa).

A disordered region spans residues 1-30 (MNYPNGKPFNRNKSQVGRTHKGQTSKIDYG). 4 residues coordinate Mg(2+): Thr87, Asp89, Glu102, and Gln121.

It belongs to the RecU family. Mg(2+) serves as cofactor.

It localises to the cytoplasm. The catalysed reaction is Endonucleolytic cleavage at a junction such as a reciprocal single-stranded crossover between two homologous DNA duplexes (Holliday junction).. Its function is as follows. Endonuclease that resolves Holliday junction intermediates in genetic recombination. Cleaves mobile four-strand junctions by introducing symmetrical nicks in paired strands. Promotes annealing of linear ssDNA with homologous dsDNA. Required for DNA repair, homologous recombination and chromosome segregation. This Staphylococcus saprophyticus subsp. saprophyticus (strain ATCC 15305 / DSM 20229 / NCIMB 8711 / NCTC 7292 / S-41) protein is Holliday junction resolvase RecU.